The following is a 251-amino-acid chain: Small ribosomal subunit protein uS2 (251 aa).

The protein belongs to the universal ribosomal protein uS2 family.

This is Small ribosomal subunit protein uS2 from Deinococcus deserti (strain DSM 17065 / CIP 109153 / LMG 22923 / VCD115).